Consider the following 322-residue polypeptide: Putative UDP-N-acetylglucosamine--dolichyl-phosphate N-acetylglucosaminephosphotransferase (322 aa).

A run of 9 helical transmembrane segments spans residues Ala5 to Ile25, Ile46 to Leu66, Ile76 to Phe96, Val102 to Ser122, Ile123 to Ile143, Leu160 to Leu180, Thr186 to Phe206, Phe222 to Ile242, and Tyr295 to Leu315.

It belongs to the glycosyltransferase 4 family.

It is found in the cell membrane. The enzyme catalyses a di-trans,poly-cis-dolichyl phosphate + UDP-N-acetyl-alpha-D-glucosamine = an N-acetyl-alpha-D-glucosaminyl-diphospho-di-trans,poly-cis-dolichol + UMP. Its activity is regulated as follows. Inhibited by tunicamycin. This Saccharolobus solfataricus (strain ATCC 35092 / DSM 1617 / JCM 11322 / P2) (Sulfolobus solfataricus) protein is Putative UDP-N-acetylglucosamine--dolichyl-phosphate N-acetylglucosaminephosphotransferase (gnpTA).